The sequence spans 269 residues: Flagellar brake protein YcgR (269 aa).

The region spanning 134–254 (QRRNFYRVTT…SRLLIQRYIT (121 aa)) is the PilZ domain.

This sequence belongs to the YcgR family. In terms of assembly, monomer. Interacts with the flagellar basal bodies.

The protein localises to the bacterial flagellum basal body. Its function is as follows. Acts as a flagellar brake, regulating swimming and swarming in a bis-(3'-5') cyclic diguanylic acid (c-di-GMP)-dependent manner. Binds 1 c-di-GMP dimer per subunit. Increasing levels of c-di-GMP lead to decreased motility. The sequence is that of Flagellar brake protein YcgR from Nitrosomonas eutropha (strain DSM 101675 / C91 / Nm57).